The chain runs to 318 residues: Beta-sarcoglycan (318 aa).

Residues 1–32 (MAAAAAAAAEQQSSNGPVKKSMREKAVERRNV) are disordered. Residues 1-65 (MAAAAAAAAE…GLRGRKGNLA (65 aa)) are Cytoplasmic-facing. Basic and acidic residues predominate over residues 21-32 (SMREKAVERRNV). The chain crosses the membrane as a helical; Signal-anchor for type II membrane protein span at residues 66–86 (ICVIVLLFLLAVINLIITLVI). The Extracellular segment spans residues 87–318 (WAVIRIGPNG…VSDNPCGNTH (232 aa)). N-linked (GlcNAc...) asparagine glycosylation is found at Asn-158, Asn-211, and Asn-258. 2 disulfides stabilise this stretch: Cys-288-Cys-314 and Cys-290-Cys-307.

The protein belongs to the sarcoglycan beta/delta/gamma/zeta family. Cross-link to form 2 major subcomplexes: one consisting of SGCB, SGCD and SGCG and the other consisting of SGCB and SGCD. The association between SGCB and SGCG is particularly strong while SGCA is loosely associated with the other sarcoglycans. In terms of processing, disulfide bonds are present.

It is found in the cell membrane. It localises to the sarcolemma. The protein resides in the cytoplasm. Its subcellular location is the cytoskeleton. In terms of biological role, component of the sarcoglycan complex, a subcomplex of the dystrophin-glycoprotein complex which forms a link between the F-actin cytoskeleton and the extracellular matrix. The polypeptide is Beta-sarcoglycan (SGCB) (Oryctolagus cuniculus (Rabbit)).